Consider the following 1401-residue polypeptide: DNA polymerase III PolC-type (1401 aa).

In terms of domain architecture, Exonuclease spans 388–543; that stretch reads FVVFDIETTG…EDAKATAEIF (156 aa).

The protein belongs to the DNA polymerase type-C family. PolC subfamily.

The protein resides in the cytoplasm. It carries out the reaction DNA(n) + a 2'-deoxyribonucleoside 5'-triphosphate = DNA(n+1) + diphosphate. In terms of biological role, required for replicative DNA synthesis. This DNA polymerase also exhibits 3' to 5' exonuclease activity. The chain is DNA polymerase III PolC-type from Caldanaerobacter subterraneus subsp. tengcongensis (strain DSM 15242 / JCM 11007 / NBRC 100824 / MB4) (Thermoanaerobacter tengcongensis).